Reading from the N-terminus, the 105-residue chain is Thioredoxin (105 aa).

One can recognise a Thioredoxin domain in the interval 1-105 (MANNVMDSSF…SLLDWINKSI (105 aa)). A disulfide bond links Cys30 and Cys33.

This sequence belongs to the thioredoxin family.

Component of the thioredoxin-thioredoxin reductase system. Participates in various redox reactions through the reversible oxidation of its active center dithiol to a disulfide and catalyzes dithiol-disulfide exchange reactions. The polypeptide is Thioredoxin (trxA) (Rickettsia conorii (strain ATCC VR-613 / Malish 7)).